Reading from the N-terminus, the 207-residue chain is Small ribosomal subunit protein uS4 (207 aa).

Residues 31–53 (KAKFDSKPGQHGRTSGARTSDFG) form a disordered region. In terms of domain architecture, S4 RNA-binding spans 97–157 (SRLDNVVYRM…EKSKKQARIV (61 aa)).

The protein belongs to the universal ribosomal protein uS4 family. In terms of assembly, part of the 30S ribosomal subunit. Contacts protein S5. The interaction surface between S4 and S5 is involved in control of translational fidelity.

Its function is as follows. One of the primary rRNA binding proteins, it binds directly to 16S rRNA where it nucleates assembly of the body of the 30S subunit. In terms of biological role, with S5 and S12 plays an important role in translational accuracy. This Paracidovorax citrulli (strain AAC00-1) (Acidovorax citrulli) protein is Small ribosomal subunit protein uS4.